Here is a 294-residue protein sequence, read N- to C-terminus: Phosphonoacetaldehyde hydrolase (294 aa).

Asp19 (nucleophile) is an active-site residue. Mg(2+)-binding residues include Asp19 and Ala21. Residue Lys60 is the Schiff-base intermediate with substrate of the active site. Asp193 serves as a coordination point for Mg(2+).

Belongs to the HAD-like hydrolase superfamily. PhnX family. As to quaternary structure, homodimer. Mg(2+) is required as a cofactor.

The catalysed reaction is phosphonoacetaldehyde + H2O = acetaldehyde + phosphate + H(+). Functionally, involved in phosphonate degradation. The polypeptide is Phosphonoacetaldehyde hydrolase (Hahella chejuensis (strain KCTC 2396)).